Reading from the N-terminus, the 483-residue chain is MLTLDTLNVMLAVSEEGLIEEMIIALLASPQLAVFFEKFPRLKAAITDDVPRWREALRSRLKDARVPPELTEEVMCYQQSQLLSTPQFIVQLPQILDLLHRLNSPWAEQARQLVDANSTITSALHTLFLQRWRLSLIVQATTLNQQLLEEEREQLLSEVQERMTLSGQLEPILADNNTAAGRLWDMSAGQLKRGDYQLIVKYGEFLNEQPELKRLAEQLGRSREAKSIPRNDAQMEAFRTMVCEPATVPEQVDGLQQSDDILRLLPPELATLGITELEYEFYRRLVEKQLLTYRLHGESWREKVIERPVVHKDYDEQPRGPFIVCVDTSGSMGGFNEQCAKAFCLALMRIALAENRRCYIMLFSTEIVRYELSGPQGIEQAIRFLSQQFRGGTDLASCFRAIMERLQSREWFDADAVVISDFIAQRLPDDVTSKVKELQRVHQHRFHAVAMSAHGKPGIMRIFDHIWRFDTGMRSRLLRRWRR.

This sequence belongs to the ViaA family. In terms of assembly, homodimer. Interacts with RavA.

It is found in the cytoplasm. Component of the RavA-ViaA chaperone complex, which may act on the membrane to optimize the function of some of the respiratory chains. ViaA stimulates the ATPase activity of RavA. The polypeptide is Regulatory protein ViaA (Escherichia coli (strain 55989 / EAEC)).